Reading from the N-terminus, the 121-residue chain is MIQPQSYLNVADNSGARKLMCIRVLGGGRQTATIGDVIIAVVKDALPNMPLKKSDVVRAVIVRTSKGVRRENGMMLCFDDNAAVVINKEGNPRGTRVFGPIARELRDRNFTKIVSLAPEVV.

Belongs to the universal ribosomal protein uL14 family. As to quaternary structure, part of the 50S ribosomal subunit.

The protein resides in the plastid. Its subcellular location is the chloroplast. Binds to 23S rRNA. This chain is Large ribosomal subunit protein uL14c, found in Tetradesmus obliquus (Green alga).